Reading from the N-terminus, the 489-residue chain is Rhamnulokinase (489 aa).

ATP is bound at residue 13 to 17; sequence ASSGR. A disulfide bridge connects residues Cys68 and Cys222. Residues Gly83 and 236-238 contribute to the substrate site; that span reads HDT. Residue Asp237 is the Proton acceptor of the active site. Thr259 provides a ligand contact to ATP. Substrate is bound at residue Asn296. An ATP-binding site is contributed by Gln304. Cys353 and Cys370 are joined by a disulfide. Gly402 provides a ligand contact to ATP. The cysteines at positions 413 and 417 are disulfide-linked.

Belongs to the rhamnulokinase family. In terms of assembly, monomer. The cofactor is Mg(2+).

It catalyses the reaction L-rhamnulose + ATP = L-rhamnulose 1-phosphate + ADP + H(+). Its pathway is carbohydrate degradation; L-rhamnose degradation; glycerone phosphate from L-rhamnose: step 2/3. In terms of biological role, involved in the catabolism of L-rhamnose (6-deoxy-L-mannose). Catalyzes the transfer of the gamma-phosphate group from ATP to the 1-hydroxyl group of L-rhamnulose to yield L-rhamnulose 1-phosphate. This is Rhamnulokinase from Escherichia coli O9:H4 (strain HS).